Here is a 496-residue protein sequence, read N- to C-terminus: Probable malate:quinone oxidoreductase (496 aa).

The protein belongs to the MQO family. It depends on FAD as a cofactor.

The enzyme catalyses (S)-malate + a quinone = a quinol + oxaloacetate. It participates in carbohydrate metabolism; tricarboxylic acid cycle; oxaloacetate from (S)-malate (quinone route): step 1/1. In Prochlorococcus marinus (strain MIT 9313), this protein is Probable malate:quinone oxidoreductase.